Consider the following 127-residue polypeptide: MERISLTIEKNLLKEVDEIINKERISRSEFIRRALEYYVKKYDWLSRIESKIGEITVIYNSKAVEDIVKLESQYKDIVIISLEIPFEGKIIRMIAIKGQRDRIIEFTNKLKGISSVELAQLTTISIE.

It belongs to the transcriptional regulatory CopG/NikR family.

This is an uncharacterized protein from Methanocaldococcus jannaschii (strain ATCC 43067 / DSM 2661 / JAL-1 / JCM 10045 / NBRC 100440) (Methanococcus jannaschii).